Here is a 74-residue protein sequence, read N- to C-terminus: UPF0346 protein SE_1114 (74 aa).

This sequence belongs to the UPF0346 family.

In Staphylococcus epidermidis (strain ATCC 12228 / FDA PCI 1200), this protein is UPF0346 protein SE_1114.